The sequence spans 437 residues: GTPase Der (437 aa).

2 consecutive EngA-type G domains span residues 4–167 (PIVA…PDNA) and 175–352 (IHFS…QHHR). Residues 10–17 (GRPNVGKS), 57–61 (DTGGI), 119–122 (NKVD), 181–188 (GRPNVGKS), 229–233 (DTAGI), and 294–297 (NKWD) contribute to the GTP site. Residues 353 to 437 (QRIQSAVLND…PIHLIKRQRQ (85 aa)) form the KH-like domain.

The protein belongs to the TRAFAC class TrmE-Era-EngA-EngB-Septin-like GTPase superfamily. EngA (Der) GTPase family. Associates with the 50S ribosomal subunit.

Its function is as follows. GTPase that plays an essential role in the late steps of ribosome biogenesis. The chain is GTPase Der from Limosilactobacillus reuteri (strain DSM 20016) (Lactobacillus reuteri).